A 128-amino-acid chain; its full sequence is Cystatin-12 (128 aa).

A signal peptide spans 1-21 (MLWKSVLPVALIVLGIHDCSF). Disulfide bonds link cysteine 82–cysteine 92 and cysteine 105–cysteine 125. Asparagine 122 carries N-linked (GlcNAc...) asparagine glycosylation.

Belongs to the cystatin family.

It is found in the secreted. In terms of biological role, may play a specialized role in spermatogenesis. The protein is Cystatin-12 (Cst12) of Rattus norvegicus (Rat).